A 147-amino-acid chain; its full sequence is Hemoglobin subunit gamma (147 aa).

Residues 3-147 (HFTAEEKAAI…VANALAYKYH (145 aa)) enclose the Globin domain. Heme b-binding residues include His64 and His93.

It belongs to the globin family. Heterotetramer of two alpha chains and two gamma chains in fetal hemoglobin (Hb F). As to expression, red blood cells.

In terms of biological role, gamma chains make up the fetal hemoglobin F, in combination with alpha chains. This is Hemoglobin subunit gamma (HBG) from Loxodonta africana (African elephant).